Here is a 460-residue protein sequence, read N- to C-terminus: Ribosomal protein uS12 methylthiotransferase RimO (460 aa).

Residues 16–130 form the MTTase N-terminal domain; it reads NKIHFISLGC…ILSAIESKEA (115 aa). The [4Fe-4S] cluster site is built by Cys25, Cys61, Cys93, Cys164, Cys168, and Cys171. Positions 150–382 constitute a Radical SAM core domain; it reads STPKHYAYLK…SQTQKKNVEK (233 aa). Positions 385–455 constitute a TRAM domain; the sequence is KQLVGQIVEA…GYDLVGRVIK (71 aa).

This sequence belongs to the methylthiotransferase family. RimO subfamily. It depends on [4Fe-4S] cluster as a cofactor.

It localises to the cytoplasm. The catalysed reaction is L-aspartate(89)-[ribosomal protein uS12]-hydrogen + (sulfur carrier)-SH + AH2 + 2 S-adenosyl-L-methionine = 3-methylsulfanyl-L-aspartate(89)-[ribosomal protein uS12]-hydrogen + (sulfur carrier)-H + 5'-deoxyadenosine + L-methionine + A + S-adenosyl-L-homocysteine + 2 H(+). Its function is as follows. Catalyzes the methylthiolation of an aspartic acid residue of ribosomal protein uS12. This is Ribosomal protein uS12 methylthiotransferase RimO from Chlamydia caviae (strain ATCC VR-813 / DSM 19441 / 03DC25 / GPIC) (Chlamydophila caviae).